The primary structure comprises 425 residues: MAPITTSREEFDEIPTVVGIFSAFGLVFTVSLFAWICCQRKSSKSNKTPPYKFVHVLKGVDIYPENLNSKKKFGADDKNEVKNKPAVPKNSLHLDLEKRDLNGNFPKTNLKPGSPSDLENATPKLFLEGEKESVSPESLKSSTSLTSEEKQEKLGTLFFSLEYNFERKAFVVNIKEARGLPAMDEQSMTSDPYIKMTILPEKKHKVKTRVLRKTLDPAFDETFTFYGIPYTQIQELALHFTILSFDRFSRDDIIGEVLIPLSGIELSEGKMLMNREIIKRNVRKSSGRGELLISLCYQSTTNTLTVVVLKARHLPKSDVSGLSDPYVKVNLYHAKKRISKKKTHVKKCTPNAVFNELFVFDIPCEGLEDISVEFLVLDSERGSRNEVIGQLVLGAAAEGTGGEHWKEICDYPRRQIAKWHVLCDG.

Topologically, residues 1–16 are vesicular; sequence MAPITTSREEFDEIPT. Residues 17–37 form a helical membrane-spanning segment; the sequence is VVGIFSAFGLVFTVSLFAWIC. Residues 38–425 are Cytoplasmic-facing; it reads CQRKSSKSNK…IAKWHVLCDG (388 aa). A compositionally biased stretch (basic and acidic residues) spans 73–83; sequence FGADDKNEVKN. Disordered stretches follow at residues 73-93 and 127-147; these read FGAD…NSLH and LEGE…SLTS. Ser-135 bears the Phosphoserine; by MAPK8 mark. The segment covering 135–146 has biased composition (low complexity); that stretch reads SPESLKSSTSLT. 2 C2 domains span residues 153–274 and 287–420; these read KLGT…MLMN and GRGE…AKWH. 3 residues coordinate Ca(2+): Asp-246, Ser-249, and Asp-252.

Belongs to the synaptotagmin family. As to quaternary structure, interacts with KIF1A; the interaction increases in presence of calcium and decreases when SYT4 is phosphorylated at Ser-135. Ca(2+) serves as cofactor. In terms of processing, phosphorylation at Ser-135 by MAPK8/JNK1 reduces interaction with KIF1A and neuronal dense core vesicles mobility. As to expression, expressed in melanocytes. Expressed in brain. Within brain, expression is highest in hippocampus, with substantial levels also detected in amygdala and thalamus.

Its subcellular location is the cytoplasmic vesicle. It localises to the secretory vesicle. The protein resides in the neuronal dense core vesicle membrane. Its function is as follows. Synaptotagmin family member which does not bind Ca(2+). Involved in neuronal dense core vesicles (DCVs) mobility through its interaction with KIF1A. Upon increased neuronal activity, phosphorylation by MAPK8/JNK1 destabilizes the interaction with KIF1A and captures DCVs to synapses. Plays a role in dendrite formation by melanocytes. This chain is Synaptotagmin-4 (SYT4), found in Homo sapiens (Human).